Reading from the N-terminus, the 592-residue chain is uncharacterized protein (592 aa).

6 consecutive transmembrane segments (helical) span residues 12-32 (IWIL…IFLL), 58-78 (PILF…ISLV), 102-122 (MGLF…SYYL), 191-211 (ISYT…GVEI), 214-234 (MMVF…FWLG), and 299-319 (FSGF…LIQV). Positions 58–358 (PILFFLLIVA…FRSTYDNFAS (301 aa)) constitute an ABC transmembrane type-1 domain. The region spanning 391–592 (VIFKNLSIQN…LQDKGQWQVL (202 aa)) is the ABC transporter domain. Residue 424-431 (GKSGAGKT) coordinates ATP.

Belongs to the ABC transporter superfamily.

The protein localises to the cell inner membrane. This is an uncharacterized protein from Haemophilus influenzae (strain ATCC 51907 / DSM 11121 / KW20 / Rd).